We begin with the raw amino-acid sequence, 315 residues long: Glutaminase (315 aa).

Positions 70, 120, 166, 173, 197, 249, and 267 each coordinate substrate.

Belongs to the glutaminase family. In terms of assembly, homotetramer.

The catalysed reaction is L-glutamine + H2O = L-glutamate + NH4(+). This chain is Glutaminase, found in Sinorhizobium fredii (strain NBRC 101917 / NGR234).